We begin with the raw amino-acid sequence, 134 residues long: Acyl carrier protein, chloroplastic (134 aa).

The N-terminal 51 residues, Met-1–Cys-51, are a transit peptide targeting the chloroplast. The Carrier domain maps to Pro-55–Val-130. O-(pantetheine 4'-phosphoryl)serine is present on Ser-90.

The protein belongs to the acyl carrier protein (ACP) family. In terms of processing, 4'-phosphopantetheine is transferred from CoA to a specific serine of apo-ACP by acpS. This modification is essential for activity because fatty acids are bound in thioester linkage to the sulfhydryl of the prosthetic group. In terms of tissue distribution, seed.

The protein localises to the plastid. It is found in the chloroplast. It functions in the pathway lipid metabolism; fatty acid biosynthesis. In terms of biological role, carrier of the growing fatty acid chain in fatty acid biosynthesis. The polypeptide is Acyl carrier protein, chloroplastic (ACL1.A2) (Brassica napus (Rape)).